A 572-amino-acid polypeptide reads, in one-letter code: Potassium-transporting ATPase potassium-binding subunit (572 aa).

The next 10 helical transmembrane spans lie at 6-26, 66-86, 135-155, 177-197, 251-271, 283-303, 382-402, 428-448, 493-513, and 537-557; these read ILFV…GTYI, FFSL…VLLL, ALAV…IVLI, IFWI…FQGV, TIIT…ALTY, GWMI…VMTI, IFGG…LAVF, MFAL…AAVI, ITIA…VMML, and FIFS…TIFP.

This sequence belongs to the KdpA family. As to quaternary structure, the system is composed of three essential subunits: KdpA, KdpB and KdpC.

It is found in the cell inner membrane. Functionally, part of the high-affinity ATP-driven potassium transport (or Kdp) system, which catalyzes the hydrolysis of ATP coupled with the electrogenic transport of potassium into the cytoplasm. This subunit binds the periplasmic potassium ions and delivers the ions to the membrane domain of KdpB through an intramembrane tunnel. This is Potassium-transporting ATPase potassium-binding subunit from Francisella philomiragia subsp. philomiragia (strain ATCC 25017 / CCUG 19701 / FSC 153 / O#319-036).